The sequence spans 71 residues: Venom peptide 2-long (71 aa).

A signal peptide spans 1 to 24 (MKQSIIIALFATIAVMACLQMVAA). 5 AXPX repeats span residues 24–27 (AVPA), 32–35 (AAPG), 44–47 (ASPE), 50–53 (ASPE), and 54–57 (AEPI). The propeptide occupies 25 to 54 (VPAPVPEAAPGPVAEAEAYASPEALASPEA). Leu-68 is modified (leucine amide).

Belongs to the MCD family. Protonectin subfamily. Expressed by the venom gland.

It localises to the secreted. Its subcellular location is the target cell membrane. Functionally, antimicrobial peptide with strong activity against the fungus B.cinerea (MIC=0.5 ug/ml), and poor activities against the fungus C.albicans (MIC=100 ug/ml), the Gram-positive bacterium S.aureus (MIC=125 ug/ml) and the Gram-negative bacterium E.coli (MIC=125 ug/ml). Antimicrobial peptide with strong activity against the fungus B.cinerea (MIC=0.4 uM), and poor activities against the fungus C.albicans (MIC=16 uM), the Gram-positive bacterium S.aureus (MIC=20 uM) and the Gram-negative bacterium E.coli (MIC=79 uM). Shows cytolytic activity against insect cell lines. Has potent hemolytic activity against ovine erythrocytes. Has potent hemolytic activity against human erythrocytes (EC(50)=31 uM). In vivo, peptide injection in the vicinity of the head and thorax of lepidopteran larvae induces feeding disorder followed by death due to starvation. The sequence is that of Venom peptide 2-long from Orancistrocerus drewseni (Solitary wasp).